The following is a 227-amino-acid chain: DNA repair protein RecO (227 aa).

The protein belongs to the RecO family.

Involved in DNA repair and RecF pathway recombination. In Pseudomonas putida (strain ATCC 47054 / DSM 6125 / CFBP 8728 / NCIMB 11950 / KT2440), this protein is DNA repair protein RecO.